A 353-amino-acid polypeptide reads, in one-letter code: MEVFFMRRYSATQINAELFWKFPKFLSINKKYVGLTNDDRMAYMLIKDRYRYSLSNNWIDKDKNVYVYFTIDDLKELLHVGKNKVTRIKQHLIDYGLLEIVKQGFDPQNKKNYPDRIYLLQPEYDPTDLISQSSHASALEQSGIPKMGTRYQNEGNLDNKGKSDSENCNKDTSALEQSGIPKMGANKDNNSSDTIKDTIKDTDQWNFSTNNYTPEQVTAQNQDLLSHLGETLTGDKEAPMFLNKDSINLIAKWFRTPEGASECISTILNAANDSRKNAESQIGHHELYFEDYNNELKRMITNRLRRYFNKMRTAKDGKIKNPKNYLYVSMRNMFDKWQNDVLMAEKDKANNKD.

The segment at 132 to 197 is disordered; it reads QSSHASALEQ…DNNSSDTIKD (66 aa). Positions 157-169 are enriched in basic and acidic residues; that stretch reads LDNKGKSDSENCN.

In Lactobacillus helveticus (Lactobacillus suntoryeus), this protein is 41 kDa protein.